Reading from the N-terminus, the 229-residue chain is MNPTRYARICEMLARRQPDLTVCMEQVHKPHNVSAIIRTADAVGVHEVHAVWPGSRMRTMASAAAGSNSWVQVKTHRTIGDAVAHLKGQGMQILATHLSDNAVDFREIDYTRPTCILMGQEKTGITQEALALADQDIIIPMIGMVQSLNVSVASALILYEAQRQRQNAGMYLRENSMLPEAEQQRLLFEGGYPVLAKVAKRKGLPYPHVNQQGEIEADADWWATMQAAG.

Residues Thr96, Ile139, and Leu148 each coordinate S-adenosyl-L-methionine.

The protein belongs to the class IV-like SAM-binding methyltransferase superfamily. RNA methyltransferase TrmH family.

It catalyses the reaction guanosine(18) in tRNA + S-adenosyl-L-methionine = 2'-O-methylguanosine(18) in tRNA + S-adenosyl-L-homocysteine + H(+). Functionally, catalyzes the 2'-O methylation of guanosine at position 18 in tRNA. The chain is tRNA (guanosine(18)-2'-O)-methyltransferase from Escherichia coli O157:H7.